The chain runs to 86 residues: Anti-adapter protein IraP (86 aa).

The stretch at 1–36 forms a coiled coil; the sequence is MKNLIAELLFKLAQKEEESKELCAQVEALEIIVTAM.

This sequence belongs to the IraP family. In terms of assembly, interacts with RssB.

Its subcellular location is the cytoplasm. In terms of biological role, inhibits RpoS proteolysis by regulating RssB activity, thereby increasing the stability of the sigma stress factor RpoS especially during phosphate starvation, but also in stationary phase and during nitrogen starvation. Its effect on RpoS stability is due to its interaction with RssB, which probably blocks the interaction of RssB with RpoS, and the consequent delivery of the RssB-RpoS complex to the ClpXP protein degradation pathway. In Escherichia coli (strain SE11), this protein is Anti-adapter protein IraP.